Here is a 316-residue protein sequence, read N- to C-terminus: Ribosomal RNA small subunit methyltransferase H (316 aa).

Residues 35–37, aspartate 55, phenylalanine 84, aspartate 105, and glutamine 112 each bind S-adenosyl-L-methionine; that span reads AGH.

This sequence belongs to the methyltransferase superfamily. RsmH family.

It localises to the cytoplasm. The enzyme catalyses cytidine(1402) in 16S rRNA + S-adenosyl-L-methionine = N(4)-methylcytidine(1402) in 16S rRNA + S-adenosyl-L-homocysteine + H(+). Its function is as follows. Specifically methylates the N4 position of cytidine in position 1402 (C1402) of 16S rRNA. The polypeptide is Ribosomal RNA small subunit methyltransferase H (Streptococcus pneumoniae (strain 70585)).